We begin with the raw amino-acid sequence, 402 residues long: Phosphoglycerate kinase (402 aa).

Residues 21 to 23 (DLN), R36, 59 to 62 (HLGR), R114, and R147 each bind substrate. ATP is bound by residues K202, E329, and 355–358 (GGDT).

The protein belongs to the phosphoglycerate kinase family. As to quaternary structure, monomer.

The protein resides in the cytoplasm. The enzyme catalyses (2R)-3-phosphoglycerate + ATP = (2R)-3-phospho-glyceroyl phosphate + ADP. The protein operates within carbohydrate degradation; glycolysis; pyruvate from D-glyceraldehyde 3-phosphate: step 2/5. The chain is Phosphoglycerate kinase from Psychrobacter sp. (strain PRwf-1).